The chain runs to 245 residues: Probable phosphatase YE2421 (245 aa).

Histidine 7, histidine 9, histidine 15, histidine 40, glutamate 73, histidine 101, histidine 131, aspartate 192, and histidine 194 together coordinate Zn(2+).

Belongs to the PHP family. In terms of assembly, homotrimer. Zn(2+) is required as a cofactor.

The polypeptide is Probable phosphatase YE2421 (Yersinia enterocolitica serotype O:8 / biotype 1B (strain NCTC 13174 / 8081)).